Reading from the N-terminus, the 469-residue chain is MDVENEQILNVNPTDPDNLSDSLFSGDEENAGTEEIKNEINGNWISASTINEARINAKAKRRLRKNSSRDSGRGDSVSDNGSEAVRSGVAVPTSPKGRLLDRRSRSGKGRGLPKKGGAGGKGVWGTPGQVYDVEEVDVKDPNYDDDQENCVYETVVLPLDETAFEKTLTPIIQEYFEHGDTNEVAEMLRDLNLGEMKSGVPVLAVSLALEGKASHREMTSKLLSDLCGTVMSTNDVEKSFDKLLKDLPELALDTPRAPQLVGQFIARAVGDGILCNTYIDSYKGTVDCVQARAALDKATVLLSMSKGGKRKDSVWGSGGGQQPVNHLVKEIDMLLKEYLLSGDMSEAEHCLKELEVPHFHHELVYEAIVMVLESTGESAFKMMLDLLKSLWKSSTITIDQMKRGYERIYNEIPDINLDVPHSYSVLERFVEECFQAGIISKQLRDLCPSRGRKRFVSEGDGGRLKPESY.

Met-1 bears the N-acetylmethionine mark. Disordered regions lie at residues 1–30 and 58–128; these read MDVE…DEEN and KAKR…GTPG. Positions 7-23 are enriched in polar residues; it reads QILNVNPTDPDNLSDSL. Residue Ser-25 is modified to Phosphoserine. Positions 58 to 64 match the Nuclear localization signal motif; the sequence is KAKRRLR. At Ser-67 the chain carries Phosphoserine; by PKB and RPS6KB1. 5 positions are modified to phosphoserine: Ser-68, Ser-71, Ser-76, Ser-78, and Ser-94. The Phosphodegron motif lies at 70 to 76; the sequence is DSGRGDS. The segment covering 114 to 125 has biased composition (gly residues); that stretch reads KKGGAGGKGVWG. Position 152 is a phosphotyrosine (Tyr-152). The MI 1 domain maps to 163–284; the sequence is AFEKTLTPII…CNTYIDSYKG (122 aa). Phosphoserine occurs at positions 313 and 317. The 124-residue stretch at 326–449 folds into the MI 2 domain; it reads HLVKEIDMLL…SKQLRDLCPS (124 aa). The Nuclear localization signal motif lies at 448–454; it reads PSRGRKR. At Ser-457 the chain carries Phosphoserine.

This sequence belongs to the PDCD4 family. As to quaternary structure, interacts (via MI domains) with EIF4A2. Interacts (via MI domains) with EIF4A1 (via N-terminal domain). Heterotrimer with EIF4A1; one molecule of PDCD4 binds two molecules of EIF4A1. Interacts with EIF4G1. May form a complex with EIF4A1 and EIF4G1. The interaction between PDCD4 and EIF4A1 interferes with the interaction between EIF4A1 and EIF4G. When phosphorylated, interacts with BTRC and FBXW11. Post-translationally, polyubiquitinated, leading to its proteasomal degradation. Rapidly degraded in response to mitogens. Phosphorylation of the phosphodegron promotes interaction with BTRC and proteasomal degradation. In terms of processing, phosphorylated at Ser-67 by RPS6KB1 in response to mitogens; phosphorylation promotes proteasomal degradation of PDCD4.

It localises to the nucleus. Its subcellular location is the cytoplasm. Its function is as follows. Inhibits translation initiation and cap-dependent translation. May excert its function by hindering the interaction between EIF4A1 and EIF4G. Inhibits the helicase activity of EIF4A. Modulates the activation of JUN kinase. Down-regulates the expression of MAP4K1, thus inhibiting events important in driving invasion, namely, MAPK85 activation and consequent JUN-dependent transcription. May play a role in apoptosis. Tumor suppressor. Inhibits tumor promoter-induced neoplastic transformation. Binds RNA. The sequence is that of Programmed cell death protein 4 (Pdcd4) from Rattus norvegicus (Rat).